Reading from the N-terminus, the 181-residue chain is Adenine phosphoribosyltransferase (181 aa).

It belongs to the purine/pyrimidine phosphoribosyltransferase family. As to quaternary structure, homodimer.

It localises to the cytoplasm. It carries out the reaction AMP + diphosphate = 5-phospho-alpha-D-ribose 1-diphosphate + adenine. It functions in the pathway purine metabolism; AMP biosynthesis via salvage pathway; AMP from adenine: step 1/1. Catalyzes a salvage reaction resulting in the formation of AMP, that is energically less costly than de novo synthesis. This is Adenine phosphoribosyltransferase from Methylorubrum extorquens (strain CM4 / NCIMB 13688) (Methylobacterium extorquens).